A 143-amino-acid polypeptide reads, in one-letter code: MLLILNGPNLNRLGLREPGVYGSQTLEDLERQCEAWGAELEMSVTCRQSNYEGQLLEWVQDAEEQGFTGLVINPGALTHYSYALRDAIAGQRLPVVEVHISNVDAREEFRHQSVTAAVCRGKISGLGFSGYRLAMEYLAEVLE.

The active-site Proton acceptor is tyrosine 21. Substrate-binding residues include asparagine 73, histidine 79, and aspartate 86. The active-site Proton donor is histidine 99. Residues 100–101 and arginine 110 contribute to the substrate site; that span reads IS.

The protein belongs to the type-II 3-dehydroquinase family. In terms of assembly, homododecamer.

It catalyses the reaction 3-dehydroquinate = 3-dehydroshikimate + H2O. The protein operates within metabolic intermediate biosynthesis; chorismate biosynthesis; chorismate from D-erythrose 4-phosphate and phosphoenolpyruvate: step 3/7. In terms of biological role, catalyzes a trans-dehydration via an enolate intermediate. The protein is 3-dehydroquinate dehydratase of Deinococcus radiodurans (strain ATCC 13939 / DSM 20539 / JCM 16871 / CCUG 27074 / LMG 4051 / NBRC 15346 / NCIMB 9279 / VKM B-1422 / R1).